The chain runs to 298 residues: 2-dehydro-3-deoxy-D-arabinonate dehydratase (298 aa).

A substrate-binding site is contributed by Ile-86. Glu-148, Glu-150, and Asp-169 together coordinate Mg(2+). Substrate is bound by residues Lys-187 and Thr-261.

Belongs to the FAH family. As to quaternary structure, homotetramer. The cofactor is Mg(2+). Requires Ca(2+) as cofactor.

The enzyme catalyses 2-dehydro-3-deoxy-D-arabinonate = 2,5-dioxopentanoate + H2O. Functionally, participates in a pentose oxidation pathway that converts D-arabinonate to 2-oxoglutarate. The protein is 2-dehydro-3-deoxy-D-arabinonate dehydratase of Saccharolobus solfataricus (strain ATCC 35092 / DSM 1617 / JCM 11322 / P2) (Sulfolobus solfataricus).